We begin with the raw amino-acid sequence, 307 residues long: UDP-3-O-acyl-N-acetylglucosamine deacetylase (307 aa).

3 residues coordinate Zn(2+): histidine 78, histidine 241, and aspartate 245. Histidine 268 acts as the Proton donor in catalysis.

It belongs to the LpxC family. It depends on Zn(2+) as a cofactor.

It carries out the reaction a UDP-3-O-[(3R)-3-hydroxyacyl]-N-acetyl-alpha-D-glucosamine + H2O = a UDP-3-O-[(3R)-3-hydroxyacyl]-alpha-D-glucosamine + acetate. Its pathway is glycolipid biosynthesis; lipid IV(A) biosynthesis; lipid IV(A) from (3R)-3-hydroxytetradecanoyl-[acyl-carrier-protein] and UDP-N-acetyl-alpha-D-glucosamine: step 2/6. Functionally, catalyzes the hydrolysis of UDP-3-O-myristoyl-N-acetylglucosamine to form UDP-3-O-myristoylglucosamine and acetate, the committed step in lipid A biosynthesis. The polypeptide is UDP-3-O-acyl-N-acetylglucosamine deacetylase (Delftia acidovorans (strain DSM 14801 / SPH-1)).